Reading from the N-terminus, the 480-residue chain is Salicylate hydroxylase asL1 (480 aa).

Residues 17-37 (PMEIAIVGGGIVGVILAIGLT) form a helical membrane-spanning segment. FAD-binding residues include E47 and A60. The N-linked (GlcNAc...) asparagine glycan is linked to N87. R131 is an FAD binding site. Residue N168 is glycosylated (N-linked (GlcNAc...) asparagine). Catalysis depends on residues R213 and Y246. Residue N250 is glycosylated (N-linked (GlcNAc...) asparagine). Residues D329 and A342 each contribute to the FAD site. 2 N-linked (GlcNAc...) asparagine glycosylation sites follow: N400 and N464.

This sequence belongs to the paxM FAD-dependent monooxygenase family. Requires FAD as cofactor.

The protein resides in the membrane. It functions in the pathway secondary metabolite biosynthesis; terpenoid biosynthesis. Functionally, salicylate hydroxylase; part of the gene cluster that mediates the biosynthesis of xenovulene A, an unusual meroterpenoid that has potent inhibitory effects on the human gamma-aminobutyrate A (GABAA) benzodiazepine receptor. The first step of xenovulene A biosynthesis is the biosynthesis of 3-methylorcinaldehyde performed by the non-reducing polyketide synthase aspks1. The salicylate hydroxylase asL1 then catalyzes the oxidative dearomatization of 3-methylorcinaldehyde to yield a dearomatized hydroxycyclohexadione. The 2-oxoglutarate-dependent dioxygenase asL3 further catalyzes the oxidative ring expansion to provide the first tropolone metabolite. The cytochrome P450 monooxygenase asR2 allows the synthesis of tropolone hemiacetal. In parallel, a previously unrecognised class of terpene cyclase, asR6, produces alpha-humulene from farnesylpyrophosphate (FPP). The putative Diels-Alderase asR5 probably catalyzes the formation of the tropolone-humulene skeleton by linking humulene and the polyketide moiety. Oxidative-ring contractions catalyzed by asL4 and asL6 then processively remove carbon atoms from the polyketide to yield xenovulene A. The polypeptide is Salicylate hydroxylase asL1 (Sarocladium schorii (Acremonium strictum (strain IMI 501407))).